A 198-amino-acid polypeptide reads, in one-letter code: Recombination protein RecR (198 aa).

The C4-type zinc-finger motif lies at 57-72; the sequence is CEKCNTFTEAQICEVC. One can recognise a Toprim domain in the interval 80–175; the sequence is TLLCVVETPA…SVTRLARGVP (96 aa).

Belongs to the RecR family.

Its function is as follows. May play a role in DNA repair. It seems to be involved in an RecBC-independent recombinational process of DNA repair. It may act with RecF and RecO. The sequence is that of Recombination protein RecR from Paraburkholderia phymatum (strain DSM 17167 / CIP 108236 / LMG 21445 / STM815) (Burkholderia phymatum).